The chain runs to 674 residues: MEPIDDILFEVTDAFKTQKEDLLELVTLIDIYGEQVNQEGSYEEKTRFIETLNTLLEDNPSTTGEIGWDLPKGLLKFLSKDNVDVNGRLGTNMIVQGVMKCFYAISIQGEPKKCLITGLELLSSLCSKDFSKSDQQNKEDFVDKKANTLPPEGVIENSSNRKDFPSYGESKSSNEFFLKLKSYILFEFIGASLKRISTLFPSKYLGAAVSTIEKFVYSHADTFEDALFLLRRVYTFCRNYIPPDPPKDIQLNEDFTREMFDKVVEEESELQVRLLRRLCTFGISTPIKTVTTNADVKYYCALNQQKFELSAYYTEYLELFCRYYQMAFSLDVDIEGEFQNVIKECRIIYKSVPQEISAVNDEAKLVLERMVYKLAYTFEVQKAAKEKNVGLDYNGVILFSGIHYLETNQHLVKEMNITDAIYLYLRFTTPSLYSKVYYNVAVESVSRYWLWYAITTEPLEDVKKELKNLSVFVTKTLLHVLLQKNCIQVNQQLRMITFTLLTRLLCLIPEKVAFEFILDVLKTSPLPLAKTSVLCVFKDLSRRRISTKDNDSETDLIVEKLSKLKVNDSNKAQQSNIRHYIQLDSSKMKAVHDCCLQTIQDSFTADAKKSDILLLLTYLNIFIVLKKTWDEDLLKIVCSKIDSNLKSVEPDKLPKYKEIVDKNESLNDYFTGIK.

This sequence belongs to the YBP1 family. Interacts with YAP1. Forms a peroxide stress induced complex with YAP1 in the cytoplasm. Systematic proteome-wide 2-hybrid interaction studies suggest that YAP1, HYR1/GPX3, and YBP1 all interact with the nuclear pore complex subunit NUP116, which is involved in nucleocytoplasmic transport.

It localises to the cytoplasm. Its function is as follows. Involved in oxidative stress response and redox homeostasis. Required for hydrogen peroxide-induced oxidation and nuclear localization (activation) of YAP1. Functions probably in concert with HYP1/GPX3, the actual YAP1 modifying enzyme. YBP1 is not required for HYP1/GPX3-independent, diamide-induced oxidation of YAP1. This is YAP1-binding protein 1 from Saccharomyces cerevisiae (strain ATCC 204508 / S288c) (Baker's yeast).